We begin with the raw amino-acid sequence, 195 residues long: ATP-dependent Clp protease proteolytic subunit (195 aa).

The Nucleophile role is filled by Ser-99. Residue His-124 is part of the active site.

This sequence belongs to the peptidase S14 family. In terms of assembly, fourteen ClpP subunits assemble into 2 heptameric rings which stack back to back to give a disk-like structure with a central cavity, resembling the structure of eukaryotic proteasomes.

Its subcellular location is the cytoplasm. The catalysed reaction is Hydrolysis of proteins to small peptides in the presence of ATP and magnesium. alpha-casein is the usual test substrate. In the absence of ATP, only oligopeptides shorter than five residues are hydrolyzed (such as succinyl-Leu-Tyr-|-NHMec, and Leu-Tyr-Leu-|-Tyr-Trp, in which cleavage of the -Tyr-|-Leu- and -Tyr-|-Trp bonds also occurs).. Cleaves peptides in various proteins in a process that requires ATP hydrolysis. Has a chymotrypsin-like activity. Plays a major role in the degradation of misfolded proteins. The sequence is that of ATP-dependent Clp protease proteolytic subunit from Coxiella burnetii (strain RSA 331 / Henzerling II).